The sequence spans 300 residues: Acetylglutamate kinase (300 aa).

Substrate contacts are provided by residues glycine 73–glycine 74, arginine 95, and asparagine 197.

Belongs to the acetylglutamate kinase family. ArgB subfamily.

The protein localises to the cytoplasm. It catalyses the reaction N-acetyl-L-glutamate + ATP = N-acetyl-L-glutamyl 5-phosphate + ADP. The protein operates within amino-acid biosynthesis; L-arginine biosynthesis; N(2)-acetyl-L-ornithine from L-glutamate: step 2/4. Functionally, catalyzes the ATP-dependent phosphorylation of N-acetyl-L-glutamate. This Bordetella parapertussis (strain 12822 / ATCC BAA-587 / NCTC 13253) protein is Acetylglutamate kinase.